Consider the following 218-residue polypeptide: Serine/threonine-protein phosphatase 2 (218 aa).

Residues aspartate 22, histidine 24, aspartate 51, and asparagine 77 each coordinate Mn(2+). Histidine 78 (proton donor) is an active-site residue. Residue histidine 187 coordinates Mn(2+).

Belongs to the PPP phosphatase family. PP-1 subfamily. It depends on Mn(2+) as a cofactor.

The enzyme catalyses O-phospho-L-seryl-[protein] + H2O = L-seryl-[protein] + phosphate. The catalysed reaction is O-phospho-L-threonyl-[protein] + H2O = L-threonyl-[protein] + phosphate. Its activity is regulated as follows. Inhibited by cadmium, copper, zinc when added activity but with less efficiency. Can hydrolyze phosphorylated Ser-, Thr- or Tyr-substrates in vitro. The natural substrate is unknown. The chain is Serine/threonine-protein phosphatase 2 (pphB) from Salmonella typhimurium (strain LT2 / SGSC1412 / ATCC 700720).